A 557-amino-acid polypeptide reads, in one-letter code: Protein Red (557 aa).

Positions 1–84 are disordered; the sequence is MPERDSEPFS…RKKKSYYAKL (84 aa). The span at 16–25 shows a compositional bias: basic and acidic residues; the sequence is DGHDVDDPHS. Positions 42-53 are enriched in low complexity; that stretch reads TPRAAPTSAPPS. Lys98 and Lys137 each carry N6-acetyllysine. Lys151 is covalently cross-linked (Glycyl lysine isopeptide (Lys-Gly) (interchain with G-Cter in SUMO2)). The segment at 181-205 is disordered; sequence KEKEEEELMEKPQKETKKDEDPENK. Residue Ser287 is modified to Phosphoserine. Positions 294 to 303 are enriched in basic residues; it reads RNKKLKKKDK. The tract at residues 294-402 is disordered; sequence RNKKLKKKDK…PIDVDKGPGS (109 aa). Basic and acidic residues predominate over residues 304–313; the sequence is GKLEEKKPPE. Residues Lys310 and Lys331 each participate in a glycyl lysine isopeptide (Lys-Gly) (interchain with G-Cter in SUMO2) cross-link. Positions 332-398 are enriched in basic and acidic residues; the sequence is TPRDKERERY…VDDEPIDVDK (67 aa). Tandem repeats lie at residues 342–343, 344–345, 346–347, 348–349, 350–351, 352–353, 354–355, 356–357, 358–359, 360–361, 362–363, 364–365, 366–367, 368–369, 370–371, 372–373, and 374–375. The tract at residues 342–375 is 17 X 2 AA tandem repeats of R-[ED]; it reads RERERDRERDRDRDRERERERDRERERERDRERE. Residues Lys386, Lys388, Lys404, and Lys408 each participate in a glycyl lysine isopeptide (Lys-Gly) (interchain with G-Cter in SUMO2) cross-link. Phosphoserine is present on residues Ser417 and Ser460. Thr485 is subject to Phosphothreonine. Residues Lys496, Lys501, and Lys509 each participate in a glycyl lysine isopeptide (Lys-Gly) (interchain with G-Cter in SUMO2) cross-link. Residue Ser536 is modified to Phosphoserine. Residues Lys541, Lys543, Lys544, and Lys553 each participate in a glycyl lysine isopeptide (Lys-Gly) (interchain with G-Cter in SUMO2) cross-link.

Belongs to the RED family. Component of the spliceosome B complex. Interacts with SMU1. Interacts with MAD1L1. May interact with DHX15.

The protein localises to the nucleus. It is found in the nucleoplasm. It localises to the chromosome. The protein resides in the cytoplasm. Its subcellular location is the cytoskeleton. The protein localises to the spindle pole. Its function is as follows. Involved in pre-mRNA splicing as a component of the spliceosome. Auxiliary spliceosomal protein that regulates selection of alternative splice sites in a small set of target pre-mRNA species. Required for normal mitotic cell cycle progression. Recruits MAD1L1 and MAD2L1 to kinetochores, and is required to trigger the spindle assembly checkpoint. Required for normal accumulation of SMU1. The polypeptide is Protein Red (IK) (Pongo abelii (Sumatran orangutan)).